Consider the following 312-residue polypeptide: DNA primase small subunit PriS (312 aa).

Residues D88, D90, and D215 contribute to the active site.

The protein belongs to the eukaryotic-type primase small subunit family. Heterodimer of a small subunit (PriS) and a large subunit (PriL). Mg(2+) is required as a cofactor. Requires Mn(2+) as cofactor.

In terms of biological role, catalytic subunit of DNA primase, an RNA polymerase that catalyzes the synthesis of short RNA molecules used as primers for DNA polymerase during DNA replication. The small subunit contains the primase catalytic core and has DNA synthesis activity on its own. Binding to the large subunit stabilizes and modulates the activity, increasing the rate of DNA synthesis while decreasing the length of the DNA fragments, and conferring RNA synthesis capability. The DNA polymerase activity may enable DNA primase to also catalyze primer extension after primer synthesis. May also play a role in DNA repair. In Pyrobaculum arsenaticum (strain DSM 13514 / JCM 11321 / PZ6), this protein is DNA primase small subunit PriS.